Reading from the N-terminus, the 207-residue chain is Coiled-coil domain-containing protein 124 homolog (207 aa).

Positions 1 to 90 (MGNPKKRAEK…KAAKKNSSLD (90 aa)) are disordered. The stretch at 5–71 (KKRAEKAEAA…RLEKEEMESL (67 aa)) forms a coiled coil. Basic and acidic residues-rich tracts occupy residues 9-28 (EKAE…KKDA) and 41-65 (NKKE…RLEK).

It belongs to the CCDC124 family. As to quaternary structure, associates with translationally inactive ribosomes in the nonrotated state.

It localises to the cytoplasm. It is found in the nucleus. Functionally, ribosome-binding protein involved in ribosome hibernation by associating with translationally inactive ribosomes. Required for translational recovery after starvation from stationary phase. May facilitate rapid translation reactivation by stabilizing the recycling-competent state of inactive ribosomes. The chain is Coiled-coil domain-containing protein 124 homolog from Schizosaccharomyces pombe (strain 972 / ATCC 24843) (Fission yeast).